We begin with the raw amino-acid sequence, 267 residues long: Hydroxyethylthiazole kinase 2 (267 aa).

Substrate is bound at residue methionine 41. Positions 116 and 166 each coordinate ATP. Glycine 193 is a binding site for substrate.

Belongs to the Thz kinase family. It depends on Mg(2+) as a cofactor.

It catalyses the reaction 5-(2-hydroxyethyl)-4-methylthiazole + ATP = 4-methyl-5-(2-phosphooxyethyl)-thiazole + ADP + H(+). It functions in the pathway cofactor biosynthesis; thiamine diphosphate biosynthesis; 4-methyl-5-(2-phosphoethyl)-thiazole from 5-(2-hydroxyethyl)-4-methylthiazole: step 1/1. Functionally, catalyzes the phosphorylation of the hydroxyl group of 4-methyl-5-beta-hydroxyethylthiazole (THZ). The sequence is that of Hydroxyethylthiazole kinase 2 from Streptococcus pneumoniae (strain 70585).